We begin with the raw amino-acid sequence, 156 residues long: ATP synthase subunit b (156 aa).

A helical transmembrane segment spans residues 11–31 (AIAFAVFVWFCMKYVWPPLLA).

This sequence belongs to the ATPase B chain family. F-type ATPases have 2 components, F(1) - the catalytic core - and F(0) - the membrane proton channel. F(1) has five subunits: alpha(3), beta(3), gamma(1), delta(1), epsilon(1). F(0) has three main subunits: a(1), b(2) and c(10-14). The alpha and beta chains form an alternating ring which encloses part of the gamma chain. F(1) is attached to F(0) by a central stalk formed by the gamma and epsilon chains, while a peripheral stalk is formed by the delta and b chains.

The protein resides in the cell inner membrane. Functionally, f(1)F(0) ATP synthase produces ATP from ADP in the presence of a proton or sodium gradient. F-type ATPases consist of two structural domains, F(1) containing the extramembraneous catalytic core and F(0) containing the membrane proton channel, linked together by a central stalk and a peripheral stalk. During catalysis, ATP synthesis in the catalytic domain of F(1) is coupled via a rotary mechanism of the central stalk subunits to proton translocation. Component of the F(0) channel, it forms part of the peripheral stalk, linking F(1) to F(0). This Psychromonas ingrahamii (strain DSM 17664 / CCUG 51855 / 37) protein is ATP synthase subunit b.